Consider the following 903-residue polypeptide: Protein translocase subunit SecA (903 aa).

ATP-binding positions include Q87, 105–109, and D494; that span reads GEGKT. The segment at 861-883 is disordered; sequence SGSQGAAPRQPVRAEGKKVGRND. Residues 872 to 881 show a composition bias toward basic and acidic residues; it reads VRAEGKKVGR. Positions 885, 887, 896, and 897 each coordinate Zn(2+).

This sequence belongs to the SecA family. In terms of assembly, monomer and homodimer. Part of the essential Sec protein translocation apparatus which comprises SecA, SecYEG and auxiliary proteins SecDF. Other proteins may also be involved. Zn(2+) is required as a cofactor.

Its subcellular location is the cell membrane. The protein localises to the cytoplasm. It carries out the reaction ATP + H2O + cellular proteinSide 1 = ADP + phosphate + cellular proteinSide 2.. Part of the Sec protein translocase complex. Interacts with the SecYEG preprotein conducting channel. Has a central role in coupling the hydrolysis of ATP to the transfer of proteins into and across the cell membrane, serving as an ATP-driven molecular motor driving the stepwise translocation of polypeptide chains across the membrane. The polypeptide is Protein translocase subunit SecA (Symbiobacterium thermophilum (strain DSM 24528 / JCM 14929 / IAM 14863 / T)).